We begin with the raw amino-acid sequence, 262 residues long: Enoyl-[acyl-carrier-protein] reductase [NADH] FabI (262 aa).

NAD(+)-binding positions include G13, 19–20, Q40, 64–65, and I92; these read SI and DV. A95 contributes to the substrate binding site. Residues Y146 and Y156 each act as proton acceptor in the active site. NAD(+) contacts are provided by residues K163 and 192–196; that span reads IRTLA.

This sequence belongs to the short-chain dehydrogenases/reductases (SDR) family. FabI subfamily. As to quaternary structure, homotetramer.

It catalyses the reaction a 2,3-saturated acyl-[ACP] + NAD(+) = a (2E)-enoyl-[ACP] + NADH + H(+). The enzyme catalyses (2E)-butenoyl-[ACP] + NADH + H(+) = butanoyl-[ACP] + NAD(+). The catalysed reaction is (2E)-decenoyl-[ACP] + NADH + H(+) = decanoyl-[ACP] + NAD(+). It carries out the reaction (2E)-hexadecenoyl-[ACP] + NADH + H(+) = hexadecanoyl-[ACP] + NAD(+). It catalyses the reaction (2E,9Z)-hexadecadienoyl-[ACP] + NADH + H(+) = (9Z)-hexadecenoyl-[ACP] + NAD(+). The enzyme catalyses (2E)-5-methylhexenoyl-[ACP] + NADH + H(+) = 5-methylhexanoyl-[ACP] + NAD(+). The protein operates within lipid metabolism; fatty acid biosynthesis. It functions in the pathway cofactor biosynthesis; biotin biosynthesis. Its activity is regulated as follows. Inhibited by diazaborines, triclosan (5-chloro-2-2,4-dichlorophenoxyphenol), 1,4-disubstituted imidazoles, 1,4-benzodiazepine derivatives, naphthyridinone derivatives, luteolin and curcumin. The antibiotic diazaborine interferes with the activity by binding to the protein and NAD. Its function is as follows. Catalyzes the reduction of a carbon-carbon double bond in an enoyl moiety that is covalently linked to an acyl carrier protein (ACP). Involved in the elongation cycle of fatty acid which are used in the lipid metabolism and in the biotin biosynthesis. The protein is Enoyl-[acyl-carrier-protein] reductase [NADH] FabI (fabI) of Escherichia coli (strain K12).